Consider the following 128-residue polypeptide: Large ribosomal subunit protein eL8 (128 aa).

This sequence belongs to the eukaryotic ribosomal protein eL8 family. As to quaternary structure, part of the 50S ribosomal subunit. Probably part of the RNase P complex.

It is found in the cytoplasm. Multifunctional RNA-binding protein that recognizes the K-turn motif in ribosomal RNA, the RNA component of RNase P, box H/ACA, box C/D and box C'/D' sRNAs. This chain is Large ribosomal subunit protein eL8, found in Staphylothermus marinus (strain ATCC 43588 / DSM 3639 / JCM 9404 / F1).